We begin with the raw amino-acid sequence, 422 residues long: UDP-N-acetylglucosamine 1-carboxyvinyltransferase (422 aa).

22-23 (KN) contacts phosphoenolpyruvate. Arg93 contributes to the UDP-N-acetyl-alpha-D-glucosamine binding site. The Proton donor role is filled by Cys117. Position 117 is a 2-(S-cysteinyl)pyruvic acid O-phosphothioketal (Cys117). Residues 122 to 126 (RPVDL), Asp308, and Ile330 each bind UDP-N-acetyl-alpha-D-glucosamine.

It belongs to the EPSP synthase family. MurA subfamily.

Its subcellular location is the cytoplasm. The enzyme catalyses phosphoenolpyruvate + UDP-N-acetyl-alpha-D-glucosamine = UDP-N-acetyl-3-O-(1-carboxyvinyl)-alpha-D-glucosamine + phosphate. It participates in cell wall biogenesis; peptidoglycan biosynthesis. Cell wall formation. Adds enolpyruvyl to UDP-N-acetylglucosamine. This chain is UDP-N-acetylglucosamine 1-carboxyvinyltransferase, found in Legionella pneumophila (strain Paris).